A 128-amino-acid chain; its full sequence is Glycine cleavage system H protein (128 aa).

Residues 22–104 (VATVGITEHA…YGEGWIFKMK (83 aa)) enclose the Lipoyl-binding domain. Lysine 63 is modified (N6-lipoyllysine).

The protein belongs to the GcvH family. In terms of assembly, the glycine cleavage system is composed of four proteins: P, T, L and H. Requires (R)-lipoate as cofactor.

Functionally, the glycine cleavage system catalyzes the degradation of glycine. The H protein shuttles the methylamine group of glycine from the P protein to the T protein. The protein is Glycine cleavage system H protein of Methylacidiphilum infernorum (isolate V4) (Methylokorus infernorum (strain V4)).